Consider the following 400-residue polypeptide: Acetate kinase (400 aa).

Asparagine 7 is a Mg(2+) binding site. Position 14 (lysine 14) interacts with ATP. Substrate is bound at residue arginine 91. The Proton donor/acceptor role is filled by aspartate 148. Residues histidine 208 to glycine 212, aspartate 284 to arginine 286, and glycine 332 to asparagine 336 each bind ATP. Position 384 (glutamate 384) interacts with Mg(2+).

It belongs to the acetokinase family. Homodimer. Mg(2+) is required as a cofactor. Requires Mn(2+) as cofactor.

It is found in the cytoplasm. The catalysed reaction is acetate + ATP = acetyl phosphate + ADP. It functions in the pathway metabolic intermediate biosynthesis; acetyl-CoA biosynthesis; acetyl-CoA from acetate: step 1/2. In terms of biological role, catalyzes the formation of acetyl phosphate from acetate and ATP. Can also catalyze the reverse reaction. The chain is Acetate kinase from Coprothermobacter proteolyticus (strain ATCC 35245 / DSM 5265 / OCM 4 / BT).